A 38-amino-acid chain; its full sequence is Mu-agatoxin-Hc1c (38 aa).

Disulfide bonds link Cys-3–Cys-19, Cys-10–Cys-24, Cys-18–Cys-34, and Cys-26–Cys-32. Ser-38 is modified (serine amide).

This sequence belongs to the neurotoxin 07 (Beta/delta-agtx) family. 02 (aga-3) subfamily. As to expression, expressed by the venom gland.

The protein localises to the secreted. Functionally, insecticidal neurotoxin that induces irreversible neuromuscular blockade in house crickets (A.domesticus). Modifies presynaptic voltage-gated sodium channels (Nav), causing them to open at the normal resting potential of the nerve. This leads to spontaneous release of neurotransmitter and repetitive action potentials in motor neurons. The sequence is that of Mu-agatoxin-Hc1c from Hololena curta (Funnel-web spider).